Consider the following 988-residue polypeptide: Vacuolar sorting protein 18 (988 aa).

Residues 589-749 (NKNLNPRRLI…VVKQEKGAKR (161 aa)) form a CHCR repeat. A coiled-coil region spans residues 785–819 (KEAICSSLEDYNKQIEQLKEEMNDATRGADNIRND). Residues 836-886 (CGVCKRKILMMSGDFRMAQGYSSAGPLAPFYVFPCGHSFHAQCLITHVTSC) form an RING-type; degenerate zinc finger.

Belongs to the VPS18 family. As to quaternary structure, core component of at least two putative endosomal tethering complexes, the homotypic fusion and vacuole protein sorting (HOPS) complex and the class C core vacuole/endosome tethering (CORVET) complex. Their common core is composed of the class C Vps proteins VPS11, VCL1, VPS18 and VPS33, which in HOPS further associates with VPS39 and VPS41 and in CORVET with VPS3.

It is found in the endosome membrane. The protein resides in the vacuole membrane. The protein localises to the cytoplasm. Its function is as follows. Essential protein required during embryogenesis. Believed to act as a core component of the putative HOPS endosomal tethering complex and of the class C core vacuole/endosome tethering (CORVET) complex. CORVET is required for vacuolar transport of SYP22. HOPS is required for the central vacuole formation. Involved in root development. Plays a role in vesicle-mediated protein trafficking to lysosomal compartments including the endocytic membrane transport pathways. The chain is Vacuolar sorting protein 18 from Arabidopsis thaliana (Mouse-ear cress).